Consider the following 467-residue polypeptide: Probable serine hydroxymethyltransferase, cytosolic (467 aa).

The residue at position 243 (K243) is an N6-(pyridoxal phosphate)lysine.

It belongs to the SHMT family. In terms of assembly, homotetramer. It depends on pyridoxal 5'-phosphate as a cofactor.

The protein resides in the cytoplasm. The enzyme catalyses (6R)-5,10-methylene-5,6,7,8-tetrahydrofolate + glycine + H2O = (6S)-5,6,7,8-tetrahydrofolate + L-serine. Its pathway is one-carbon metabolism; tetrahydrofolate interconversion. Interconversion of serine and glycine. The sequence is that of Probable serine hydroxymethyltransferase, cytosolic from Schizosaccharomyces pombe (strain 972 / ATCC 24843) (Fission yeast).